Here is a 397-residue protein sequence, read N- to C-terminus: Acetate kinase (397 aa).

A Mg(2+)-binding site is contributed by Asn7. Residue Lys14 participates in ATP binding. Substrate is bound at residue Arg91. Residue Asp148 is the Proton donor/acceptor of the active site. ATP contacts are provided by residues 208-212 (HLGNG), 283-285 (DFR), and 331-335 (GLGEN). Glu383 contacts Mg(2+).

This sequence belongs to the acetokinase family. In terms of assembly, homodimer. Mg(2+) serves as cofactor. The cofactor is Mn(2+).

It is found in the cytoplasm. The catalysed reaction is acetate + ATP = acetyl phosphate + ADP. Its pathway is metabolic intermediate biosynthesis; acetyl-CoA biosynthesis; acetyl-CoA from acetate: step 1/2. Catalyzes the formation of acetyl phosphate from acetate and ATP. Can also catalyze the reverse reaction. The chain is Acetate kinase from Heliobacterium modesticaldum (strain ATCC 51547 / Ice1).